Reading from the N-terminus, the 130-residue chain is Histone H2A type 2-B (130 aa).

The disordered stretch occupies residues 1–22; it reads MSGRGKQGGKARAKAKSRSSRA. At Ser-2 the chain carries N-acetylserine. Ser-2 carries the post-translational modification Phosphoserine; by RPS6KA5. Arg-4 is modified (citrulline; alternate). Arg-4 is subject to Symmetric dimethylarginine; by PRMT5; alternate. Lys-6 is modified (N6-(2-hydroxyisobutyryl)lysine). Positions 7-19 are enriched in basic residues; sequence QGGKARAKAKSRS. N6-(2-hydroxyisobutyryl)lysine; alternate is present on Lys-10. 2 positions are modified to N6-(beta-hydroxybutyryl)lysine; alternate: Lys-10 and Lys-14. Residue Lys-10 is modified to N6-lactoyllysine; alternate. Residue Lys-10 is modified to N6-succinyllysine; alternate. Residue Lys-14 forms a Glycyl lysine isopeptide (Lys-Gly) (interchain with G-Cter in ubiquitin); alternate linkage. Lys-16 participates in a covalent cross-link: Glycyl lysine isopeptide (Lys-Gly) (interchain with G-Cter in ubiquitin). Lys-37 carries the post-translational modification N6-(2-hydroxyisobutyryl)lysine; alternate. Residue Lys-37 is modified to N6-(beta-hydroxybutyryl)lysine; alternate. Lys-37 is modified (N6-crotonyllysine; alternate). N6-(2-hydroxyisobutyryl)lysine is present on residues Lys-75 and Lys-76. Lys-96 is subject to N6-(2-hydroxyisobutyryl)lysine; alternate. An N6-(beta-hydroxybutyryl)lysine; alternate modification is found at Lys-96. The residue at position 96 (Lys-96) is an N6-succinyllysine; alternate. Lys-96 carries the post-translational modification N6-glutaryllysine; alternate. N5-methylglutamine is present on Gln-105. Lys-119 is subject to N6-(2-hydroxyisobutyryl)lysine; alternate. Lys-119 is modified (N6-(beta-hydroxybutyryl)lysine; alternate). N6-crotonyllysine; alternate occurs at positions 119 and 120. N6-glutaryllysine; alternate is present on residues Lys-119 and Lys-120. Lys-120 is covalently cross-linked (Glycyl lysine isopeptide (Lys-Gly) (interchain with G-Cter in ubiquitin); alternate). At Thr-121 the chain carries Phosphothreonine; by DCAF1.

Belongs to the histone H2A family. In terms of assembly, the nucleosome is a histone octamer containing two molecules each of H2A, H2B, H3 and H4 assembled in one H3-H4 heterotetramer and two H2A-H2B heterodimers. The octamer wraps approximately 147 bp of DNA. Deiminated on Arg-4 in granulocytes upon calcium entry. In terms of processing, monoubiquitination of Lys-120 (H2AK119Ub) by RING1, TRIM37 and RNF2/RING2 complex gives a specific tag for epigenetic transcriptional repression and participates in X chromosome inactivation of female mammals. It is involved in the initiation of both imprinted and random X inactivation. Ubiquitinated H2A is enriched in inactive X chromosome chromatin. Ubiquitination of H2A functions downstream of methylation of 'Lys-27' of histone H3 (H3K27me). H2AK119Ub by RNF2/RING2 can also be induced by ultraviolet and may be involved in DNA repair. Monoubiquitination of Lys-120 (H2AK119Ub) by TRIM37 may promote transformation of cells in a number of breast cancers. Following DNA double-strand breaks (DSBs), it is ubiquitinated through 'Lys-63' linkage of ubiquitin moieties by the E2 ligase UBE2N and the E3 ligases RNF8 and RNF168, leading to the recruitment of repair proteins to sites of DNA damage. Ubiquitination at Lys-14 and Lys-16 (H2AK13Ub and H2AK15Ub, respectively) in response to DNA damage is initiated by RNF168 that mediates monoubiquitination at these 2 sites, and 'Lys-63'-linked ubiquitin are then conjugated to monoubiquitin; RNF8 is able to extend 'Lys-63'-linked ubiquitin chains in vitro. Deubiquitinated by USP51 at Lys-14 and Lys-16 (H2AK13Ub and H2AK15Ub, respectively) after damaged DNA is repaired. H2AK119Ub and ionizing radiation-induced 'Lys-63'-linked ubiquitination (H2AK13Ub and H2AK15Ub) are distinct events. Post-translationally, phosphorylation on Ser-2 (H2AS1ph) is enhanced during mitosis. Phosphorylation on Ser-2 by RPS6KA5/MSK1 directly represses transcription. Acetylation of H3 inhibits Ser-2 phosphorylation by RPS6KA5/MSK1. Phosphorylation at Thr-121 (H2AT120ph) by DCAF1 is present in the regulatory region of many tumor suppresor genes and down-regulates their transcription. Symmetric dimethylation on Arg-4 by the PRDM1/PRMT5 complex may play a crucial role in the germ-cell lineage. In terms of processing, glutamine methylation at Gln-105 (H2AQ104me) by FBL is specifically dedicated to polymerase I. It is present at 35S ribosomal DNA locus and impairs binding of the FACT complex. Post-translationally, crotonylation (Kcr) is specifically present in male germ cells and marks testis-specific genes in post-meiotic cells, including X-linked genes that escape sex chromosome inactivation in haploid cells. Crotonylation marks active promoters and enhancers and confers resistance to transcriptional repressors. It is also associated with post-meiotically activated genes on autosomes. Lactylated in macrophages by EP300/P300 by using lactoyl-CoA directly derived from endogenous or exogenous lactate, leading to stimulates gene transcription.

It localises to the nucleus. The protein resides in the chromosome. Core component of nucleosome. Nucleosomes wrap and compact DNA into chromatin, limiting DNA accessibility to the cellular machineries which require DNA as a template. Histones thereby play a central role in transcription regulation, DNA repair, DNA replication and chromosomal stability. DNA accessibility is regulated via a complex set of post-translational modifications of histones, also called histone code, and nucleosome remodeling. This Homo sapiens (Human) protein is Histone H2A type 2-B.